Reading from the N-terminus, the 92-residue chain is Large ribosomal subunit protein eL43 (92 aa).

A C4-type zinc finger spans residues 39-60; that stretch reads CEFCGKYAVKRKAVGIWGCKAC.

It belongs to the eukaryotic ribosomal protein eL43 family.

The sequence is that of Large ribosomal subunit protein eL43 (RPL37A) from Gossypium hirsutum (Upland cotton).